The following is a 460-amino-acid chain: 3-isopropylmalate dehydratase large subunit (460 aa).

[4Fe-4S] cluster is bound by residues Cys-338, Cys-398, and Cys-401.

Belongs to the aconitase/IPM isomerase family. LeuC type 1 subfamily. Heterodimer of LeuC and LeuD. The cofactor is [4Fe-4S] cluster.

The catalysed reaction is (2R,3S)-3-isopropylmalate = (2S)-2-isopropylmalate. The protein operates within amino-acid biosynthesis; L-leucine biosynthesis; L-leucine from 3-methyl-2-oxobutanoate: step 2/4. Functionally, catalyzes the isomerization between 2-isopropylmalate and 3-isopropylmalate, via the formation of 2-isopropylmaleate. The protein is 3-isopropylmalate dehydratase large subunit of Streptococcus sanguinis (strain SK36).